The chain runs to 426 residues: Endoglucanase Z (426 aa).

An N-terminal signal peptide occupies residues 1–43 (MPLSYLDKNPVIDSKKHALRKKLFLSCAYFGLSLACLSSNAWA). The catalytic stretch occupies residues 44 to 332 (SVEPLSVNGN…VKSIIQSWPY (289 aa)). Residue E176 is the Proton donor of the active site. E263 serves as the catalytic Nucleophile. The linker stretch occupies residues 333 to 366 (KAGSAASATTDPSTDTTTDTTVDEPTTTDTPATA). A disordered region spans residues 336–367 (SAASATTDPSTDTTTDTTVDEPTTTDTPATAD). The interval 367–426 (DCANANVYPNWVSKDWAGGQPTHNEAGQSIVYKGNLYTANWYTASVPGSDSSWTQVGSCN) is cellulose-binding. The cysteines at positions 368 and 425 are disulfide-linked.

Belongs to the glycosyl hydrolase 5 (cellulase A) family.

It is found in the secreted. It catalyses the reaction Endohydrolysis of (1-&gt;4)-beta-D-glucosidic linkages in cellulose, lichenin and cereal beta-D-glucans.. Functionally, represents 97% of the global cellulase activity. The protein is Endoglucanase Z (celZ) of Dickeya dadantii (strain 3937) (Erwinia chrysanthemi (strain 3937)).